The sequence spans 475 residues: Ribulose bisphosphate carboxylase large chain (475 aa).

Residues 1–2 constitute a propeptide that is removed on maturation; the sequence is MS. Proline 3 is subject to N-acetylproline. Lysine 14 is modified (N6,N6,N6-trimethyllysine). Residues asparagine 123 and threonine 173 each coordinate substrate. Lysine 175 acts as the Proton acceptor in catalysis. Lysine 177 contacts substrate. Residues lysine 201, aspartate 203, and glutamate 204 each contribute to the Mg(2+) site. An N6-carboxylysine modification is found at lysine 201. Residue histidine 294 is the Proton acceptor of the active site. The substrate site is built by arginine 295, histidine 327, and serine 379.

It belongs to the RuBisCO large chain family. Type I subfamily. As to quaternary structure, heterohexadecamer of 8 large chains and 8 small chains; disulfide-linked. The disulfide link is formed within the large subunit homodimers. It depends on Mg(2+) as a cofactor. The disulfide bond which can form in the large chain dimeric partners within the hexadecamer appears to be associated with oxidative stress and protein turnover.

Its subcellular location is the plastid. The protein resides in the chloroplast. The catalysed reaction is 2 (2R)-3-phosphoglycerate + 2 H(+) = D-ribulose 1,5-bisphosphate + CO2 + H2O. The enzyme catalyses D-ribulose 1,5-bisphosphate + O2 = 2-phosphoglycolate + (2R)-3-phosphoglycerate + 2 H(+). Its function is as follows. RuBisCO catalyzes two reactions: the carboxylation of D-ribulose 1,5-bisphosphate, the primary event in carbon dioxide fixation, as well as the oxidative fragmentation of the pentose substrate in the photorespiration process. Both reactions occur simultaneously and in competition at the same active site. This chain is Ribulose bisphosphate carboxylase large chain, found in Oenothera argillicola (Appalachian evening primrose).